The following is a 179-amino-acid chain: Stathmin-2 (179 aa).

Positions 1–26 (MAKTAMAYKEKMKELSMLSLICSCFY) are membrane attachment. S16 carries the phosphoserine modification. S-palmitoyl cysteine attachment occurs at residues C22 and C24. In terms of domain architecture, SLD spans 38-179 (DDMEVKQINK…NKELQVELSG (142 aa)). Residues 39 to 96 (DMEVKQINKRASGQAFELILKPPSPISEAPRTLASPKKKDLSLEEIQKKLEAAEGRRK) form a regulatory/phosphorylation domain region. S50 bears the Phosphoserine mark. Phosphoserine; by MAPK8 occurs at positions 62 and 73. The stretch at 75 to 179 (KKKDLSLEEI…NKELQVELSG (105 aa)) forms a coiled coil. Phosphoserine is present on residues S80 and S97.

This sequence belongs to the stathmin family. Interacts with ITM2C. Interacts with MAPK8. Interacts with KIFBP. Interacts (via the N-terminal region) with CIB1 (via C-terminal region); the interaction is direct, occurs in a calcium-dependent manner and attenuates the neurite outgrowth inhibition of STMN2. Post-translationally, sumoylated. Phosphorylated by MAPK9 and MAPK10 in the developing brain cortex. Phosphorylated mostly by MAPK8. In terms of processing, N-terminal palmitoylation promotes specific anchoring to the cytosolic leaflet of Golgi membranes and subsequent vesicular trafficking along dendrites and axons. Neuronal Stathmins are substrates for palmitoyltransferases ZDHHC3, ZDHHC7 and ZDHHC15. As to expression, expressed in neurons (at protein level). Present in growth cones and abundant in developing neurons.

The protein localises to the cytoplasm. Its subcellular location is the perinuclear region. The protein resides in the cell projection. It localises to the growth cone. It is found in the axon. The protein localises to the membrane. Its subcellular location is the golgi apparatus. The protein resides in the endosome. It localises to the lamellipodium. Functionally, regulator of microtubule stability. When phosphorylated by MAPK8, stabilizes microtubules and consequently controls neurite length in cortical neurons. In the developing brain, negatively regulates the rate of exit from multipolar stage and retards radial migration from the ventricular zone. This chain is Stathmin-2 (Stmn2), found in Rattus norvegicus (Rat).